Here is a 178-residue protein sequence, read N- to C-terminus: ATP-dependent protease subunit HslV (178 aa).

Thr7 is an active-site residue. Na(+)-binding residues include Gly162, Cys165, and Thr168.

Belongs to the peptidase T1B family. HslV subfamily. As to quaternary structure, a double ring-shaped homohexamer of HslV is capped on each side by a ring-shaped HslU homohexamer. The assembly of the HslU/HslV complex is dependent on binding of ATP.

Its subcellular location is the cytoplasm. The catalysed reaction is ATP-dependent cleavage of peptide bonds with broad specificity.. With respect to regulation, allosterically activated by HslU binding. In terms of biological role, protease subunit of a proteasome-like degradation complex believed to be a general protein degrading machinery. The protein is ATP-dependent protease subunit HslV of Dechloromonas aromatica (strain RCB).